Here is a 350-residue protein sequence, read N- to C-terminus: Twinfilin-1 (350 aa).

Position 2 is an N-acetylserine (serine 2). Positions 2-139 (SHQTGIQASE…SLHGYKKYLL (138 aa)) constitute an ADF-H 1 domain. Phosphoserine is present on residues serine 143 and serine 277. One can recognise an ADF-H 2 domain in the interval 175-313 (LQGVAFPISR…TADFLYEEVH (139 aa)). At tyrosine 309 the chain carries Phosphotyrosine. The interval 316–350 (QHAHKQSFAKPKGPAGKRGIRRLIRGPAETEATTD) is disordered. Phosphothreonine is present on threonine 349.

The protein belongs to the actin-binding proteins ADF family. Twinfilin subfamily. In terms of assembly, interacts with G-actin; ADP-actin form and capping protein (CP). May also be able to interact with TWF2 and phosphoinositides, PI(4,5)P2. When bound to PI(4,5)P2, it is down-regulated. Interacts with ACTG1. In terms of processing, phosphorylated on serine and threonine residues. In terms of tissue distribution, expressed at high levels in the colon, testis, ovary, prostate and lung. Expressed at lower levels in the brain, bladder and heart. Not detected in liver.

It localises to the cytoplasm. Its subcellular location is the cytoskeleton. Its function is as follows. Actin-binding protein involved in motile and morphological processes. Inhibits actin polymerization, likely by sequestering G-actin. By capping the barbed ends of filaments, it also regulates motility. Seems to play an important role in clathrin-mediated endocytosis and distribution of endocytic organelles. The sequence is that of Twinfilin-1 (TWF1) from Homo sapiens (Human).